We begin with the raw amino-acid sequence, 571 residues long: Gag-Pro polyprotein (571 aa).

G2 is lipidated: N-myristoyl glycine; by host. The PPXY motif motif lies at 100–103 (PPPY). 2 repeats span residues 342–362 (PPGP…CPTK) and 367–387 (PPGP…CPTL). 2 CCHC-type zinc fingers span residues 345–362 (PCYR…CPTK) and 370–387 (PCPI…CPTL). The active-site Protease; shared with dimeric partner is the T453.

In terms of assembly, homodimer; the homodimers are part of the immature particles. Interacts with human TSG101 and NEDD4; these interactions are essential for budding and release of viral particles. As to quaternary structure, homodimer; further assembles as homohexamers. Post-translationally, specific enzymatic cleavages by the viral protease yield mature proteins. The polyprotein is cleaved during and after budding, this process is termed maturation. The protease is autoproteolytically processed at its N- and C-termini. In terms of processing, myristoylated. Myristoylation of the matrix (MA) domain mediates the transport and binding of Gag polyproteins to the host plasma membrane and is required for the assembly of viral particles.

Its subcellular location is the virion. Its function is as follows. The matrix domain targets Gag, Gag-Pro and Gag-Pro-Pol polyproteins to the plasma membrane via a multipartite membrane binding signal, that includes its myristoylated N-terminus. Functionally, matrix protein. Forms the spherical core of the virus that encapsulates the genomic RNA-nucleocapsid complex. In terms of biological role, binds strongly to viral nucleic acids and promote their aggregation. Also destabilizes the nucleic acids duplexes via highly structured zinc-binding motifs. Its function is as follows. The aspartyl protease mediates proteolytic cleavages of Gag and Gag-Pol polyproteins during or shortly after the release of the virion from the plasma membrane. Cleavages take place as an ordered, step-wise cascade to yield mature proteins. This process is called maturation. Displays maximal activity during the budding process just prior to particle release from the cell. The protein is Gag-Pro polyprotein of Bovine leukemia virus (isolate Japanese BLV-1) (BLV).